Consider the following 1213-residue polypeptide: MILRRSSVFSAFYLHAFLLCLRTTVSDASGHFELEILSMQNANGELQNGACCDGARNPADRKCTRDECDTYFKVCLKEYQSRVSSAGACSFGTGSTPVLGGNKFSTKGTRSEKSRIVLPFSFAWPRSYTLIVEALDFNNETASESGKLIEKAYHSGMINPNRQWQRLTHNGPVAQFEYQIRVTCLEHYYGFGCNKFCRPRDEFFGHYTCDQNGNKTCLEGWTGPDCNTAICRQGCSTEHGSCKQPGGCKCLYGWQGPYCDKCIPHPGCVHGTCVEPWQCLCDTNWGGQLCDKDLNYCGTHQPCLNGGTCSNTGPDKYQCSCEDGYSGVNCERAEHACLSNPCANGGTCKETSQGYECHCAIGWSGTSCEINVDDCTPNQCKHGGTCQDLVNGFKCACPPHWTGKTCQIDANECEDKPCVNAKSCHNLIGAYFCECLPGWSGQNCDININDCKGQCLNGGTCKDLVNGYRCLCPPGYTGEQCEKDVDECASSPCLNGGRCQDEVNGFQCLCPAGFSGQLCQLDIDYCKPNPCQNGAQCFNLASDYFCKCPDDYEGKNCSHLKDHCRTTSCQVIDSCTVAVASNSTPEGVRYISSNVCGPHGRCRSQAGGQFTCECQEGFRGTYCHENINDCESNPCRNGGTCIDKVNVYQCICADGWEGVHCEINIDDCSLNPCLNKGACQDLVNDFYCECRNGWKGKTCHSRDSQCDEATCNNGGTCHDEGDTFKCRCSPGWEGATCNIAKNSSCLPNPCENGGTCVVNGDSFNCVCKEGWEGSTCTENTNDCNPHPCYNSGTCVDGENWYRCECAPGFAGPDCRININECQSSPCAFGSTCVDEINGYRCLCPPGRIGPDCQEVVGRPCIANGQVTADGAKWEEDCNICQCQNGRIHCTMMWCGPKSCRIGKARGGCPASQSCVPIKEEQCFVKPCPSLGECWPSAPPPPSKCHASFSYQDDSCANITFTFNKENMPQGLSVEHVCNELRHWYLLKNLSTEYAVSISCEPSSSASNEIHISISTEEPRTDRSPIKDITVQIIDLVSKHNGNSTIIKAITGVRVHQIPSPKTDYLVPLLSSIFIVLWIFALASAFLWCIHRRRKQNTHSNTATSATEDNTTNNVREQLNQIKNPIEKHAAHGVPIKDYEGKNSIIAKIRTHNSEVEEEDMDKHLQKARFTKQPAYTLVEREERAPNKNPNWTNKQDNRDLETAQSLNRMEYIV.

A signal peptide spans 1 to 26 (MILRRSSVFSAFYLHAFLLCLRTTVS). The Extracellular portion of the chain corresponds to 27 to 1064 (DASGHFELEI…HQIPSPKTDY (1038 aa)). N-linked (GlcNAc...) asparagine glycosylation occurs at Asn-139. Residues 182–226 (VTCLEHYYGFGCNKFCRPRDEFFGHYTCDQNGNKTCLEGWTGPDC) form the DSL domain. 2 disulfide bridges follow: Cys-184–Cys-193 and Cys-197–Cys-209. Asn-214 carries N-linked (GlcNAc...) asparagine glycosylation. Disulfide bonds link Cys-217-Cys-226, Cys-231-Cys-242, Cys-235-Cys-248, Cys-250-Cys-259, Cys-262-Cys-273, Cys-268-Cys-279, Cys-281-Cys-290, Cys-297-Cys-309, Cys-303-Cys-319, Cys-321-Cys-330, Cys-337-Cys-348, Cys-342-Cys-357, Cys-359-Cys-368, Cys-375-Cys-386, Cys-380-Cys-395, Cys-397-Cys-406, Cys-413-Cys-424, Cys-418-Cys-433, Cys-435-Cys-444, Cys-451-Cys-461, Cys-455-Cys-470, Cys-472-Cys-481, Cys-488-Cys-499, Cys-493-Cys-508, Cys-510-Cys-519, Cys-526-Cys-537, Cys-531-Cys-546, Cys-548-Cys-557, Cys-596-Cys-612, Cys-614-Cys-623, Cys-630-Cys-641, Cys-635-Cys-650, Cys-652-Cys-661, Cys-668-Cys-679, Cys-673-Cys-688, Cys-690-Cys-699, Cys-706-Cys-717, Cys-711-Cys-726, and Cys-728-Cys-737. Positions 227–260 (NTAICRQGCSTEHGSCKQPGGCKCLYGWQGPYCD) constitute an EGF-like 1 domain. Positions 261–291 (KCIPHPGCVHGTCVEPWQCLCDTNWGGQLCD) constitute an EGF-like 2; atypical domain. 2 EGF-like domains span residues 293–331 (DLNY…VNCE) and 333–369 (AEHA…TSCE). In terms of domain architecture, EGF-like 5; calcium-binding spans 371–407 (NVDDCTPNQCKHGGTCQDLVNGFKCACPPHWTGKTCQ). An EGF-like 6; calcium-binding domain is found at 409-445 (DANECEDKPCVNAKSCHNLIGAYFCECLPGWSGQNCD). The 36-residue stretch at 447-482 (NINDCKGQCLNGGTCKDLVNGYRCLCPPGYTGEQCE) folds into the EGF-like 7; calcium-binding domain. Positions 484–520 (DVDECASSPCLNGGRCQDEVNGFQCLCPAGFSGQLCQ) constitute an EGF-like 8; calcium-binding domain. EGF-like domains are found at residues 522–558 (DIDY…KNCS) and 592–624 (SSNV…TYCH). Residue Asn-556 is glycosylated (N-linked (GlcNAc...) asparagine). The region spanning 626–662 (NINDCESNPCRNGGTCIDKVNVYQCICADGWEGVHCE) is the EGF-like 11; calcium-binding domain. In terms of domain architecture, EGF-like 12; calcium-binding spans 664 to 700 (NIDDCSLNPCLNKGACQDLVNDFYCECRNGWKGKTCH). In terms of domain architecture, EGF-like 13 spans 702–738 (RDSQCDEATCNNGGTCHDEGDTFKCRCSPGWEGATCN). A glycan (N-linked (GlcNAc...) asparagine) is linked at Asn-742. 9 disulfide bridges follow: Cys-745–Cys-756, Cys-750–Cys-765, Cys-767–Cys-776, Cys-783–Cys-794, Cys-788–Cys-803, Cys-805–Cys-814, Cys-821–Cys-832, Cys-826–Cys-841, and Cys-843–Cys-852. The 32-residue stretch at 746–777 (LPNPCENGGTCVVNGDSFNCVCKEGWEGSTCT) folds into the EGF-like 14 domain. Positions 779–815 (NTNDCNPHPCYNSGTCVDGENWYRCECAPGFAGPDCR) constitute an EGF-like 15; calcium-binding domain. Positions 817 to 853 (NINECQSSPCAFGSTCVDEINGYRCLCPPGRIGPDCQ) constitute an EGF-like 16; calcium-binding domain. Positions 860–914 (CIANGQVTADGAKWEEDCNICQCQNGRIHCTMMWCGPKSCRIGKARGGCPASQSC) constitute a VWFC domain. The EGF-like 17 domain occupies 918 to 956 (KEEQCFVKPCPSLGECWPSAPPPPSKCHASFSYQDDSCA). Asn-957, Asn-988, and Asn-1042 each carry an N-linked (GlcNAc...) asparagine glycan. Residues 1065-1087 (LVPLLSSIFIVLWIFALASAFLW) form a helical membrane-spanning segment. Topologically, residues 1088–1213 (CIHRRRKQNT…QSLNRMEYIV (126 aa)) are cytoplasmic. A disordered region spans residues 1181-1202 (EERAPNKNPNWTNKQDNRDLET).

Its subcellular location is the membrane. It is found in the cell membrane. Ligand for Notch receptors and involved in the mediation of Notch signaling. Seems to be involved in cell-fate decisions. This is Protein jagged-1b (jag1b) from Danio rerio (Zebrafish).